The sequence spans 169 residues: Type II secretion system protein H (169 aa).

The propeptide at 1 to 29 (MRVARLPLLHPHRAAPVVRRQLRGSSLLE) is leader sequence. The residue at position 30 (methionine 30) is an N-methylmethionine. Residues 32-52 (LVIALIALAGVLAAAALTGGI) traverse the membrane as a helical segment.

The protein belongs to the GSP H family. Type II secretion is composed of four main components: the outer membrane complex, the inner membrane complex, the cytoplasmic secretion ATPase and the periplasm-spanning pseudopilus. Interacts with core component XpsG. Interacts with minor pseudopilins XpsI and XpsJ. In terms of processing, cleaved by prepilin peptidase. Methylated by prepilin peptidase at the amino group of the N-terminal phenylalanine once the leader sequence is cleaved by prepilin peptidase.

The protein resides in the cell inner membrane. Component of the type II secretion system required for the energy-dependent secretion of extracellular factors such as proteases and toxins from the periplasm. Part of the pseudopilus tip complex that is critical for the recognition and binding of secretion substrates. The polypeptide is Type II secretion system protein H (xpsH) (Xanthomonas campestris pv. campestris (strain ATCC 33913 / DSM 3586 / NCPPB 528 / LMG 568 / P 25)).